A 732-amino-acid polypeptide reads, in one-letter code: Elongation factor 2 (732 aa).

The region spanning 19 to 228 is the tr-type G domain; the sequence is ELIRNIGIVA…TKITFKDIVE (210 aa). GTP contacts are provided by residues 28–35, 94–98, and 148–151; these read AHIDHGKT, DTPGH, and NKID. Diphthamide is present on His-598.

It belongs to the TRAFAC class translation factor GTPase superfamily. Classic translation factor GTPase family. EF-G/EF-2 subfamily.

Its subcellular location is the cytoplasm. In terms of biological role, catalyzes the GTP-dependent ribosomal translocation step during translation elongation. During this step, the ribosome changes from the pre-translocational (PRE) to the post-translocational (POST) state as the newly formed A-site-bound peptidyl-tRNA and P-site-bound deacylated tRNA move to the P and E sites, respectively. Catalyzes the coordinated movement of the two tRNA molecules, the mRNA and conformational changes in the ribosome. In Thermoplasma acidophilum (strain ATCC 25905 / DSM 1728 / JCM 9062 / NBRC 15155 / AMRC-C165), this protein is Elongation factor 2 (fusA).